Reading from the N-terminus, the 434-residue chain is dTDP-D-glucose 4,6-dehydratase (434 aa).

T134 lines the substrate pocket. D135 (proton donor) is an active-site residue. Residues E136 and Y169 each act as proton acceptor in the active site. The span at 286–309 (NNNNNNNNNNNNNNNNNNNNNNNN) shows a compositional bias: low complexity. The tract at residues 286-310 (NNNNNNNNNNNNNNNNNNNNNNNND) is disordered.

The protein belongs to the NAD(P)-dependent epimerase/dehydratase family. dTDP-glucose dehydratase subfamily. Requires NAD(+) as cofactor.

It catalyses the reaction dTDP-alpha-D-glucose = dTDP-4-dehydro-6-deoxy-alpha-D-glucose + H2O. In Dictyostelium discoideum (Social amoeba), this protein is dTDP-D-glucose 4,6-dehydratase (tgds).